We begin with the raw amino-acid sequence, 467 residues long: Mothers against decapentaplegic homolog 2 (467 aa).

N-acetylserine is present on Ser-2. Residue Thr-8 is modified to Phosphothreonine. The MH1 domain maps to 10-176 (PVVKRLLGWK…YQRVETPVLP (167 aa)). N6-acetyllysine is present on Lys-19. Residues Cys-74, Cys-149, Cys-161, and His-166 each coordinate Zn(2+). Positions 207 to 217 (PAGIEPQSNYI) are enriched in polar residues. The tract at residues 207-251 (PAGIEPQSNYIPETPPPGYISEDGETSDQQLNQSMDTGSPAELSP) is disordered. Residue Thr-220 is modified to Phosphothreonine. A PY-motif motif is present at residues 221–225 (PPPGY). Residues 233–243 (SDQQLNQSMDT) show a composition bias toward polar residues. Position 240 is a phosphoserine; by CAMK2 (Ser-240). 6 positions are modified to phosphoserine: Ser-245, Ser-250, Ser-255, Ser-458, Ser-460, and Ser-464. Residues 274–467 (WCSIAYYELN…SPSVRCSSMS (194 aa)) enclose the MH2 domain. A phosphoserine; by TGFBR1 mark is found at Ser-465 and Ser-467.

It belongs to the dwarfin/SMAD family. As to quaternary structure, monomer; in the absence of TGF-beta. Heterodimer; in the presence of TGF-beta. Forms a heterodimer with co-SMAD, SMAD4, in the nucleus to form the transactivation complex SMAD2/SMAD4. Found in a complex with SMAD3 and TRIM33 upon addition of TGF-beta. Identified in a complex that contains at least ZNF451, SMAD2, SMAD3 and SMAD4. Interacts (via the MH2 domain) with ZFYVE9; may form trimers with the SMAD4 co-SMAD. Interacts with TAZ/WWRT1. Interacts with FOXH1. Interacts with SNW1. Interacts with CREB-binding protein (CBP) and EP300. Interacts with SNON. Interacts with ALK4/ACVR1B. Interacts with SKOR1. Interacts with SKOR2. Interacts with PRDM16. Interacts (via MH2 domain) with LEMD3. Interacts with RBPMS. Interacts with WWP1. Interacts (dephosphorylated form, via the MH1 and MH2 domains) with RANBP3 (via its C-terminal R domain); the interaction results in the export of dephosphorylated SMAD3 out of the nucleus and termination of the TGF-beta signaling. Interacts with PDPK1 (via PH domain). Interacts with DAB2; the interactions are enhanced upon TGF-beta stimulation. Interacts with USP15. Interacts with PPP5C. Interacts with LDLRAD4 (via the SMAD interaction motif). Interacts (via MH2 domain) with PMEPA1 (via the SMAD interaction motif). Interacts with ZFHX3. Interacts with ZNF451. Interacts with SMURF2 when phosphorylated on Ser-465/467. Interacts with PPM1A. Interacts with TGF-beta. Interacts with TGFBR1. Interacts with TGIF. Interacts with SMAD3 and TRIM33. Interacts with ZNF580. Interacts with NEDD4L in response to TGF-beta. Interacts with HGS. Interacts with AIP1. Interacts with WWP1. Interacts with PML. Interacts weakly with ZNF8. Interacts (when phosphorylated) with RNF111; RNF111 acts as an enhancer of the transcriptional responses by mediating ubiquitination and degradation of SMAD2 inhibitors. Interacts with YAP1 (when phosphorylated at 'Ser-55'). Interacts when phosphorylated with IPO7; the interaction facilitates translocation of SMAD2 to the nucleus. Interacts with MTMR4; negatively regulates TGF-beta signaling through SMAD2 dephosphorylation and retention in endosomes. In response to TGF-beta, phosphorylated on the C-terminal SXS motif by TGF-beta and activin type 1 receptor kinases, phosphorylation declines progressively in a KMT5A-dependent manner. Phosphorylation in this motif is required for interaction with a number of proteins including SMURF2, SNON and SMAD4 in response to TGF-beta. Dephosphorylated in this motif by PPM1A leading to disruption of the SMAD2/3-SMAD4 complex, nuclear export and termination of the TGF-beta signaling. In response to decorin, the naturally occurring inhibitor of TGF-beta signaling, phosphorylated on Ser-240 by CaMK2. Phosphorylated by MAPK3 upon EGF stimulation; which increases transcriptional activity and stability, and is blocked by calmodulin. Phosphorylated by PDPK1. In terms of processing, acetylated on Lys-19 by coactivators in response to TGF-beta signaling, which increases transcriptional activity. Post-translationally, in response to TGF-beta, ubiquitinated by NEDD4L; which promotes its degradation. Monoubiquitinated, leading to prevent DNA-binding. Deubiquitination by USP15 alleviates inhibition and promotes activation of TGF-beta target genes. Ubiquitinated by RNF111, leading to its degradation: only SMAD2 proteins that are 'in use' are targeted by RNF111, RNF111 playing a key role in activating SMAD2 and regulating its turnover.

It localises to the cytoplasm. It is found in the nucleus. Its function is as follows. Receptor-regulated SMAD (R-SMAD) that is an intracellular signal transducer and transcriptional modulator activated by TGF-beta (transforming growth factor) and activin type 1 receptor kinases. Binds the TRE element in the promoter region of many genes that are regulated by TGF-beta and, on formation of the SMAD2/SMAD4 complex, activates transcription. Promotes TGFB1-mediated transcription of odontoblastic differentiation genes in dental papilla cells. Positively regulates PDPK1 kinase activity by stimulating its dissociation from the 14-3-3 protein YWHAQ which acts as a negative regulator. The polypeptide is Mothers against decapentaplegic homolog 2 (SMAD2) (Bos taurus (Bovine)).